Consider the following 315-residue polypeptide: Glycine--tRNA ligase alpha subunit (315 aa).

It belongs to the class-II aminoacyl-tRNA synthetase family. Tetramer of two alpha and two beta subunits.

The protein localises to the cytoplasm. The enzyme catalyses tRNA(Gly) + glycine + ATP = glycyl-tRNA(Gly) + AMP + diphosphate. This Pseudomonas putida (strain W619) protein is Glycine--tRNA ligase alpha subunit.